Consider the following 320-residue polypeptide: Malate dehydrogenase (320 aa).

Residues 10-15 (GAGNIG) and Asp-34 contribute to the NAD(+) site. The substrate site is built by Arg-83 and Arg-89. Residues Asn-96 and 119–121 (ITN) each bind NAD(+). Substrate is bound by residues Asn-121 and Arg-152. Residue His-176 is the Proton acceptor of the active site.

It belongs to the LDH/MDH superfamily. MDH type 3 family.

The enzyme catalyses (S)-malate + NAD(+) = oxaloacetate + NADH + H(+). Its function is as follows. Catalyzes the reversible oxidation of malate to oxaloacetate. This is Malate dehydrogenase from Sphingopyxis alaskensis (strain DSM 13593 / LMG 18877 / RB2256) (Sphingomonas alaskensis).